We begin with the raw amino-acid sequence, 288 residues long: Protease HtpX homolog (288 aa).

A run of 2 helical transmembrane segments spans residues 1–21 (MHTI…LLAG) and 23–43 (IIGG…MNFF). Zn(2+) is bound at residue histidine 130. Residue glutamate 131 is part of the active site. Histidine 134 is a Zn(2+) binding site. 2 helical membrane passes run 140–160 (ILIS…AEMA) and 175–195 (IGGL…AMII). Glutamate 204 provides a ligand contact to Zn(2+).

Belongs to the peptidase M48B family. The cofactor is Zn(2+).

It localises to the cell inner membrane. This Persephonella marina (strain DSM 14350 / EX-H1) protein is Protease HtpX homolog.